Consider the following 644-residue polypeptide: Chaperone protein HscA (644 aa).

This sequence belongs to the heat shock protein 70 family.

Its function is as follows. Chaperone involved in the maturation of iron-sulfur cluster-containing proteins. Has a low intrinsic ATPase activity which is markedly stimulated by HscB. Involved in the maturation of IscU. The polypeptide is Chaperone protein HscA (Yersinia pseudotuberculosis serotype I (strain IP32953)).